The primary structure comprises 223 residues: Twisted gastrulation protein homolog 1 (223 aa).

The signal sequence occupies residues Met1–Ser25. Asn52 and Asn81 each carry an N-linked (GlcNAc...) asparagine glycan.

This sequence belongs to the twisted gastrulation protein family. As to quaternary structure, interacts with CHRD and BMP4. This interaction enhances CHRD/BMP4 complex formation. Interacts with BMP7.

The protein resides in the secreted. Functionally, may be involved in dorsoventral axis formation. Seems to antagonize BMP signaling by forming ternary complexes with CHRD and BMPs, thereby preventing BMPs from binding to their receptors. In addition to the anti-BMP function, also has pro-BMP activity, partly mediated by cleavage and degradation of CHRD, which releases BMPs from ternary complexes. May be an important modulator of BMP-regulated cartilage development and chondrocyte differentiation. May play a role in thymocyte development. The chain is Twisted gastrulation protein homolog 1 (TWSG1) from Pongo abelii (Sumatran orangutan).